The primary structure comprises 510 residues: MSFPGVIFVVSFFPLLMGIAVYRLLWHPLASFKGPKLAAVTDWWFCKKWLNGRYHQTLEKLQLQYGDVIRIAPNELVFATPEAARDIYTRCNPDQDLQFIKQPPFYKQSEGFPTLVTETDPAAHRTLRKPLERGFSPSSLKDYGRVIERVADDLTAQLEKASEHSNAVDVKAWAARFTFDVITEVTFGKSSGTVAQGKNTVWLDLLTGNIAAAAVGVAIRRQPHAVKTLLRSIFAKLSKTAKLRAQYLSVCRKMCEERLRDPPKAANLFDHVLATCPPVEKDADNHGYLVFLQGQAAALVSGGTETSSTLLSSLIYNLLAHPAHLARLQYEVRNAFSQSGEIDIESTKQLKYLQAVIDESLRIFPPVGFGLPRVCPGAMIGGVYVPKGTVVQAPDILMVRNSRYFVRPYEFLPERWLPKDHEFYDEQFSGDRKEASKPFSLGPRQCIGMSLAYAEWRIVLAKLVLKFDWEIIGETQDLMDVARLKLLWEMPPILVSFKPVGGLAAASPGA.

The helical transmembrane segment at 1–21 (MSFPGVIFVVSFFPLLMGIAV) threads the bilayer. Cys446 contributes to the heme binding site.

The protein belongs to the cytochrome P450 family. Heme is required as a cofactor.

It is found in the membrane. It functions in the pathway secondary metabolite biosynthesis; terpenoid biosynthesis. Functionally, cytochrome P450 monooxygenase; part of the gene cluster that mediates the biosynthesis of betaestacins. The bifunctional terpene synthase btcA converts isopentenyl diphosphate (IPP) and dimethylallyl diphosphate (DMAPP) into the sesterterpene betaestacin I. The C-terminal prenyltransferase (PT) domain of btcA catalyzes formation of GFPP, whereas the N-terminal terpene cyclase (TC) domain catalyzes the cyclization of GFPP into betaestacin I. The cytochrome P450 monooxygenase btcB is then responsible for the six-step oxidation of betaestacin I to yield betaestacin II. The roles of the cytochrome P450 monooxygenase btcC and the alpha-ketoglutarate-dependent dioxygenase btcD have not been identified yet. The polypeptide is Cytochrome P450 monooxygenase btcC (Neocamarosporium betae (Beet black rot fungus)).